The following is a 216-amino-acid chain: MNNMNVIIADDHPIVLFGIRKSLEQIEWVNVVGEFEDSTALINNLPKLDAHVLITDLSMPGDKYGDGITLIKYIKRHFPSLSIIVLTMNNNPAILSAVLDLDIEGIVLKQGAPTDLPKALAALQKGKKFTPESVSRLLEKISAGGYGDKRLSPKESEVLRLFAEGFLVTEIAKKLNRSIKTISSQKKSAMMKLGVENDIALLNYLSSVTLSPTDKE.

The region spanning 5–124 is the Response regulatory domain; it reads NVIIADDHPI…DLPKALAALQ (120 aa). Aspartate 56 carries the 4-aspartylphosphate modification. The 66-residue stretch at 144–209 folds into the HTH luxR-type domain; that stretch reads GGYGDKRLSP…ALLNYLSSVT (66 aa). The segment at residues 168-187 is a DNA-binding region (H-T-H motif); the sequence is VTEIAKKLNRSIKTISSQKK.

This sequence belongs to the RcsB family. In terms of assembly, interacts with RcsD and RcsA. Phosphorylated and activated by RcsD.

Functionally, component of the Rcs signaling system, which controls transcription of numerous genes. RcsB is the response regulator that binds to regulatory DNA regions. Can function both in an RcsA-dependent or RcsA-independent manner. This is Transcriptional regulatory protein RcsB from Salmonella typhimurium (strain LT2 / SGSC1412 / ATCC 700720).